Here is a 139-residue protein sequence, read N- to C-terminus: Putative pre-16S rRNA nuclease (139 aa).

It belongs to the YqgF nuclease family.

The protein localises to the cytoplasm. In terms of biological role, could be a nuclease involved in processing of the 5'-end of pre-16S rRNA. This chain is Putative pre-16S rRNA nuclease, found in Streptococcus pyogenes serotype M3 (strain ATCC BAA-595 / MGAS315).